The following is a 330-amino-acid chain: N-acetyl-gamma-glutamyl-phosphate reductase (330 aa).

Cys155 is a catalytic residue.

It belongs to the NAGSA dehydrogenase family. Type 1 subfamily.

Its subcellular location is the cytoplasm. The enzyme catalyses N-acetyl-L-glutamate 5-semialdehyde + phosphate + NADP(+) = N-acetyl-L-glutamyl 5-phosphate + NADPH + H(+). Its pathway is amino-acid biosynthesis; L-arginine biosynthesis; N(2)-acetyl-L-ornithine from L-glutamate: step 3/4. Functionally, catalyzes the NADPH-dependent reduction of N-acetyl-5-glutamyl phosphate to yield N-acetyl-L-glutamate 5-semialdehyde. This chain is N-acetyl-gamma-glutamyl-phosphate reductase, found in Shewanella halifaxensis (strain HAW-EB4).